Reading from the N-terminus, the 437-residue chain is Phosphomethylpyrimidine synthase (437 aa).

Residues Asn69, Met98, Tyr127, His163, 185–187, 226–229, and Glu265 each bind substrate; these read SRG and DACR. His269 contributes to the Zn(2+) binding site. Tyr292 is a substrate binding site. His333 serves as a coordination point for Zn(2+). The [4Fe-4S] cluster site is built by Cys409, Cys412, and Cys416.

Belongs to the ThiC family. Requires [4Fe-4S] cluster as cofactor.

It catalyses the reaction 5-amino-1-(5-phospho-beta-D-ribosyl)imidazole + S-adenosyl-L-methionine = 4-amino-2-methyl-5-(phosphooxymethyl)pyrimidine + CO + 5'-deoxyadenosine + formate + L-methionine + 3 H(+). The protein operates within cofactor biosynthesis; thiamine diphosphate biosynthesis. Its function is as follows. Catalyzes the synthesis of the hydroxymethylpyrimidine phosphate (HMP-P) moiety of thiamine from aminoimidazole ribotide (AIR) in a radical S-adenosyl-L-methionine (SAM)-dependent reaction. The sequence is that of Phosphomethylpyrimidine synthase from Clostridium novyi (strain NT).